The chain runs to 448 residues: Nucleoprotein (448 aa).

The tract at residues 1 to 55 (MSFTPGKQSSSRASSGNRSGNGILKWADQSDQSRNVQTRGRRAQPKQTATSQQPS) is disordered. Over residues 9 to 22 (SSSRASSGNRSGNG) the composition is skewed to low complexity. Polar residues-rich tracts occupy residues 29–38 (QSDQSRNVQT) and 45–55 (PKQTATSQQPS). The RNA-binding stretch occupies residues 52 to 194 (QQPSGGNVVP…GYYIEGSGRS (143 aa)). Residues 61-190 (PYYSWFSGIT…VLPQGYYIEG (130 aa)) enclose the CoV N NTD domain. 3 residues coordinate RNA: arginine 106, arginine 122, and arginine 164. The tract at residues 157-231 (TPADILDRDP…RTPTSGVTPD (75 aa)) is disordered. Residue serine 167 is modified to Phosphoserine; by host. Phosphothreonine; by host is present on threonine 174. Serine 191 bears the Phosphoserine; by host mark. Positions 193–223 (RSAPNSRSTSRASSRASSAGSRSRANSGNRT) are enriched in low complexity. In terms of domain architecture, CoV N CTD spans 259 to 384 (AKEIRQKILN…ENLNAYQQQD (126 aa)). Positions 266–384 (ILNKPRQKRS…ENLNAYQQQD (119 aa)) are dimerization. Residues 385–448 (GMMNMSPKPQ…EPYTEDTSEI (64 aa)) are disordered. Residue serine 390 is modified to Phosphoserine; by host. The segment covering 399-409 (QKNGQGENDNI) has biased composition (polar residues). A compositionally biased stretch (basic and acidic residues) spans 422–439 (KSRELTAEDISLLKKMDE). At serine 423 the chain carries Phosphoserine; by host. Threonine 427 is subject to Phosphothreonine; by host.

Belongs to the betacoronavirus nucleocapsid protein family. In terms of assembly, homooligomer. Both monomeric and oligomeric forms interact with RNA. Interacts with protein M. Interacts with NSP3; this interaction serves to tether the genome to the newly translated replicase-transcriptase complex at a very early stage of infection. ADP-ribosylated. The ADP-ribosylation is retained in the virion during infection. Post-translationally, phosphorylated on serine and threonine residues.

It localises to the virion. The protein localises to the host endoplasmic reticulum-Golgi intermediate compartment. The protein resides in the host Golgi apparatus. Its function is as follows. Packages the positive strand viral genome RNA into a helical ribonucleocapsid (RNP) and plays a fundamental role during virion assembly through its interactions with the viral genome and membrane protein M. Plays an important role in enhancing the efficiency of subgenomic viral RNA transcription as well as viral replication. The sequence is that of Nucleoprotein from Bovine coronavirus (strain F15) (BCoV).